The following is a 172-amino-acid chain: Large ribosomal subunit protein uL10 (172 aa).

Belongs to the universal ribosomal protein uL10 family. In terms of assembly, part of the ribosomal stalk of the 50S ribosomal subunit. The N-terminus interacts with L11 and the large rRNA to form the base of the stalk. The C-terminus forms an elongated spine to which L12 dimers bind in a sequential fashion forming a multimeric L10(L12)X complex.

Functionally, forms part of the ribosomal stalk, playing a central role in the interaction of the ribosome with GTP-bound translation factors. The chain is Large ribosomal subunit protein uL10 from Rhizobium etli (strain ATCC 51251 / DSM 11541 / JCM 21823 / NBRC 15573 / CFN 42).